A 228-amino-acid chain; its full sequence is 2-hydroxy-3-keto-5-methylthiopentenyl-1-phosphate phosphatase (228 aa).

Belongs to the HAD-like hydrolase superfamily. MtnX family.

The enzyme catalyses 2-hydroxy-5-methylsulfanyl-3-oxopent-1-enyl phosphate + H2O = 1,2-dihydroxy-5-(methylsulfanyl)pent-1-en-3-one + phosphate. It participates in amino-acid biosynthesis; L-methionine biosynthesis via salvage pathway; L-methionine from S-methyl-5-thio-alpha-D-ribose 1-phosphate: step 4/6. In terms of biological role, dephosphorylates 2-hydroxy-3-keto-5-methylthiopentenyl-1-phosphate (HK-MTPenyl-1-P) yielding 1,2-dihydroxy-3-keto-5-methylthiopentene (DHK-MTPene). This is 2-hydroxy-3-keto-5-methylthiopentenyl-1-phosphate phosphatase from Lysinibacillus sphaericus (strain C3-41).